The following is a 473-amino-acid chain: tRNA modification GTPase MnmE (473 aa).

Residues Arg-30, Glu-95, and Arg-134 each contribute to the (6S)-5-formyl-5,6,7,8-tetrahydrofolate site. Residues 230 to 394 (GVSTVIAGRP…LKLLMASMVE (165 aa)) form the TrmE-type G domain. GTP is bound by residues 240 to 245 (NAGKST), 259 to 265 (SHMPGTT), and 284 to 287 (DTAG). Ser-244 and Thr-265 together coordinate Mg(2+). Position 473 (Lys-473) interacts with (6S)-5-formyl-5,6,7,8-tetrahydrofolate.

Belongs to the TRAFAC class TrmE-Era-EngA-EngB-Septin-like GTPase superfamily. TrmE GTPase family. In terms of assembly, homodimer. Heterotetramer of two MnmE and two MnmG subunits. The cofactor is K(+).

It is found in the cytoplasm. Functionally, exhibits a very high intrinsic GTPase hydrolysis rate. Involved in the addition of a carboxymethylaminomethyl (cmnm) group at the wobble position (U34) of certain tRNAs, forming tRNA-cmnm(5)s(2)U34. The polypeptide is tRNA modification GTPase MnmE (Chlorobium luteolum (strain DSM 273 / BCRC 81028 / 2530) (Pelodictyon luteolum)).